The chain runs to 469 residues: Abscisic acid 8'-hydroxylase CYP707A2 (469 aa).

Residues phenylalanine 3–isoleucine 23 traverse the membrane as a helical segment. A heme-binding site is contributed by cysteine 414.

This sequence belongs to the cytochrome P450 family. Requires heme as cofactor. Expressed at low levels in fruit.

The protein resides in the membrane. It catalyses the reaction 2-cis-(+)-abscisate + reduced [NADPH--hemoprotein reductase] + O2 = (+)-8'-hydroxyabscisate + oxidized [NADPH--hemoprotein reductase] + H2O + H(+). It participates in plant hormone degradation; abscisic acid degradation. Functionally, negative regulator of fruit ripening involved in the oxidative degradation of abscisic acid (ABA). The polypeptide is Abscisic acid 8'-hydroxylase CYP707A2 (Solanum lycopersicum (Tomato)).